Consider the following 352-residue polypeptide: SKP1-like protein 20 (352 aa).

Positions 108–167 are interaction with the F-box domain of F-box proteins; the sequence is TSAADSLQLKPLVDLTSRALARIIEGKNPEEIREIFHLPDDLTEEEKLEPLKNSMDDPRI. Disordered regions lie at residues 214–251 and 267–288; these read KAVKMSKGKKKKKKKKDQKIVSSNNIHDKESHDLRSKQ and LLSAEDDISTPNAGSEDEDIDD. Residues 216–230 show a composition bias toward basic residues; that stretch reads VKMSKGKKKKKKKKD. Over residues 239-249 the composition is skewed to basic and acidic residues; sequence IHDKESHDLRS.

This sequence belongs to the SKP1 family. As to quaternary structure, part of a SCF (SKP1-cullin-F-box) protein ligase complex. In terms of tissue distribution, expressed in young seedlings, roots, leaves, floral stems, inflorescences, and siliques.

The protein resides in the nucleus. Its pathway is protein modification; protein ubiquitination. Involved in ubiquitination and subsequent proteasomal degradation of target proteins. Together with CUL1, RBX1 and a F-box protein, it forms a SCF E3 ubiquitin ligase complex. The functional specificity of this complex depends on the type of F-box protein. In the SCF complex, it serves as an adapter that links the F-box protein to CUL1. In Arabidopsis thaliana (Mouse-ear cress), this protein is SKP1-like protein 20 (ASK20).